The primary structure comprises 348 residues: N-formyl peptide receptor 2 (348 aa).

N1 is a glycosylation site (N-linked (GlcNAc...) asparagine). Over 1-24 the chain is Extracellular; the sequence is NFSTPLNEHEEVSYESAGYTVLQI. Residues 25–47 form a helical membrane-spanning segment; sequence LPLVVLGVTFVLGVLGNGLVIWV. Topologically, residues 48-58 are cytoplasmic; the sequence is AGFRMTRTVTT. The helical transmembrane segment at 59-80 threads the bilayer; the sequence is ICYLNLPLADFSFTATLPFLIV. The Extracellular portion of the chain corresponds to 81-97; that stretch reads SMAMGEKWPFGWFLCKL. An intrachain disulfide couples C95 to C173. Residues 98–118 form a helical membrane-spanning segment; sequence IHIVVDINLFGSVFLIGFIAL. At 119–137 the chain is on the cytoplasmic side; that stretch reads DRCICVLHPVWAQNHRTVS. The helical transmembrane segment at 138–159 threads the bilayer; the sequence is LAMKVIIGPWILALVLTLPVFL. The Extracellular portion of the chain corresponds to 160 to 202; it reads FLTTVTIPNGDTYCTFNFASWGGTPEERKNVAITMLTARGIIR. A helical transmembrane segment spans residues 203–223; that stretch reads FVIGFSMPMSIVAICYGLIAA. Residues 224–239 lie on the Cytoplasmic side of the membrane; it reads KIHKKGMIKSSRPLRV. A helical transmembrane segment spans residues 240–263; the sequence is LTAVVASFFICWFPFQLVALLSTV. Residues 264-283 are Extracellular-facing; it reads WLKEMLFYGKYKIINILVNP. The helical transmembrane segment at 284–303 threads the bilayer; that stretch reads TSSLAFFNSCLNPMLYVFVG. Over 304–348 the chain is Cytoplasmic; that stretch reads QDFRERLIRSLPTSLERALSEDSAPTNDTAAKCASPPAETELQAM. Positions 323–348 are disordered; it reads SEDSAPTNDTAAKCASPPAETELQAM.

Belongs to the G-protein coupled receptor 1 family. Interacts with APP; the interaction takes place at the cell surface and the complex is then rapidly internalized.

It is found in the cell membrane. Its function is as follows. Low affinity receptor for N-formyl-methionyl peptides, which are powerful neutrophil chemotactic factors. Binding of FMLP to the receptor causes activation of neutrophils. This response is mediated via a G-protein that activates a phosphatidylinositol-calcium second messenger system. Receptor for the chemokine-like protein FAM19A5, mediating FAM19A5-stimulated macrophage chemotaxis and the inhibitory effect on TNFSF11/RANKL-induced osteoclast differentiation. This Pongo pygmaeus (Bornean orangutan) protein is N-formyl peptide receptor 2 (FPR2).